The primary structure comprises 396 residues: S-adenosylmethionine synthase (396 aa).

Position 16 (H16) interacts with ATP. Mg(2+) is bound at residue D18. E44 contacts K(+). Residues E57 and Q100 each coordinate L-methionine. The interval 100 to 110 (QSPDINQGVDR) is flexible loop. Residues 165-167 (DAK), D240, 246-247 (RK), A263, and K267 each bind ATP. Residue D240 participates in L-methionine binding. Position 271 (K271) interacts with L-methionine.

The protein belongs to the AdoMet synthase family. In terms of assembly, homotetramer; dimer of dimers. The cofactor is Mg(2+). K(+) is required as a cofactor.

The protein resides in the cytoplasm. The catalysed reaction is L-methionine + ATP + H2O = S-adenosyl-L-methionine + phosphate + diphosphate. It participates in amino-acid biosynthesis; S-adenosyl-L-methionine biosynthesis; S-adenosyl-L-methionine from L-methionine: step 1/1. Its function is as follows. Catalyzes the formation of S-adenosylmethionine (AdoMet) from methionine and ATP. The overall synthetic reaction is composed of two sequential steps, AdoMet formation and the subsequent tripolyphosphate hydrolysis which occurs prior to release of AdoMet from the enzyme. This Pseudomonas fluorescens (strain ATCC BAA-477 / NRRL B-23932 / Pf-5) protein is S-adenosylmethionine synthase.